The sequence spans 44 residues: GKVWDWIKSAAKKIWSSEPVSQLKGQVLNAAKNYVAEKIGATPT.

In terms of tissue distribution, expressed by the venom gland.

It is found in the secreted. The protein localises to the target cell membrane. Disrupts cell membranes through formation of pores. Strong antimicrobial activity against Gram-positive bacteria B.subtilis, S.epidermidis, E.faecalis and S.aureus. Less active against Gram-negative bacteria P.aeruginosa and E.coli. Has no antifungal or hemolytic activity. The sequence is that of Pandinin-1 from Pandinus imperator (Emperor scorpion).